We begin with the raw amino-acid sequence, 370 residues long: Phosphoribosylformylglycinamidine cyclo-ligase (370 aa).

The protein belongs to the AIR synthase family.

The protein localises to the cytoplasm. The catalysed reaction is 2-formamido-N(1)-(5-O-phospho-beta-D-ribosyl)acetamidine + ATP = 5-amino-1-(5-phospho-beta-D-ribosyl)imidazole + ADP + phosphate + H(+). The protein operates within purine metabolism; IMP biosynthesis via de novo pathway; 5-amino-1-(5-phospho-D-ribosyl)imidazole from N(2)-formyl-N(1)-(5-phospho-D-ribosyl)glycinamide: step 2/2. The chain is Phosphoribosylformylglycinamidine cyclo-ligase from Rhodospirillum rubrum (strain ATCC 11170 / ATH 1.1.1 / DSM 467 / LMG 4362 / NCIMB 8255 / S1).